We begin with the raw amino-acid sequence, 306 residues long: D-alanine--D-alanine ligase B (306 aa).

In terms of domain architecture, ATP-grasp spans 101-303 (KLLWQGAGLP…FSQLVVRILE (203 aa)). 134 to 189 (ISALGLPLIVKPSREGSSVGMTKVVEENALQGALSLAFQHDDEILIEKWLCGPEFT) provides a ligand contact to ATP. Residues aspartate 257, glutamate 270, and asparagine 272 each coordinate Mg(2+).

This sequence belongs to the D-alanine--D-alanine ligase family. In terms of assembly, monomer. Requires Mg(2+) as cofactor. Mn(2+) serves as cofactor.

The protein resides in the cytoplasm. The catalysed reaction is 2 D-alanine + ATP = D-alanyl-D-alanine + ADP + phosphate + H(+). It participates in cell wall biogenesis; peptidoglycan biosynthesis. Functionally, cell wall formation. In Salmonella typhimurium (strain LT2 / SGSC1412 / ATCC 700720), this protein is D-alanine--D-alanine ligase B (ddlB).